Reading from the N-terminus, the 357-residue chain is MDASVKTLNTEKAKALQAALAQIEKQFGKGTIMRLGEGEVIDDIEVVSTGSLGLDIALGVGGLPRGRVIEIYGPESSGKTTLTLQVIAEMQKLAGTCAFIDAEHALDSQYAQKLGVNLQELLISQPDTGEQALEIVDALVRSGSVDLIVVDSVAALTPKAELEGEMGDSLPGLQARLMSQALRKLTATIKKSNCMVIFINQIRMKIGVMFGSPETTTGGNALKFYASVRLDIRRIGSIKRGEEVIGNETKVKVVKNKVSPPFKTAEFDILFGEGVSREGEIIDLGVIAKVIDKSGAWYAYNGEKIGQGKDNSREFLRENPELAHEIENKIRESLGVALLPSIEIEVPKGTKQAAAGA.

Glycine 73 to threonine 80 is a binding site for ATP.

The protein belongs to the RecA family.

The protein resides in the cytoplasm. Can catalyze the hydrolysis of ATP in the presence of single-stranded DNA, the ATP-dependent uptake of single-stranded DNA by duplex DNA, and the ATP-dependent hybridization of homologous single-stranded DNAs. It interacts with LexA causing its activation and leading to its autocatalytic cleavage. The chain is Protein RecA from Methylibium petroleiphilum (strain ATCC BAA-1232 / LMG 22953 / PM1).